A 357-amino-acid chain; its full sequence is MSQNSNPAVVLEKVGDIAIEQRPIPTIKDPHYVKLAIKATGICGSDIHYYRSGGIGKYILKAPMVLGHESSGQVVEVGDAVTRVKVGDRVAIEPGVPSRYSDETKEGSYNLCPHMAFAATPPIDGTLVKYYLSPEDFLVKLPEGVSYEEGACVEPLSVGVHSNKLAGVRFGTKVVVFGAGPVGLLTGAVARAFGATDVIFVDVFDNKLQRAKDFGATNTFNSSQFSTDKAQDLADGVQKLLGGNHADVVFECSGADVCIDAAVKTTKVGGTMVQVGMGKNYTNFPIAEVSGKEMKLIGCFRYSFGDYRDAVNLVATGKVNVKPLITHKFKFEDAAKAYDYNIAHGGEVVKTIIFGPE.

Residue C43 coordinates Zn(2+). Residue Y49 participates in substrate binding. Zn(2+) is bound by residues H68 and E69. Substrate is bound at residue E154. NAD(+) contacts are provided by residues D202, K207, 275–277 (VGM), and 299–301 (CFR). Substrate-binding residues include R301 and Y302.

It belongs to the zinc-containing alcohol dehydrogenase family. In terms of assembly, homotetramer. Requires Zn(2+) as cofactor.

The catalysed reaction is keto-D-fructose + NADH + H(+) = D-sorbitol + NAD(+). It catalyses the reaction xylitol + NAD(+) = D-xylulose + NADH + H(+). Polyol dehydrogenase that catalyzes the reversible NAD(+)-dependent oxidation of various sugar alcohols. Is active with D-sorbitol (D-glucitol) and xylitol as substrates, leading to the C2-oxidized product D-fructose and D-xylulose, respectively. In Saccharomyces cerevisiae (strain ATCC 204508 / S288c) (Baker's yeast), this protein is Sorbitol dehydrogenase 2 (SOR2).